The sequence spans 225 residues: Large ribosomal subunit protein bL25 (225 aa).

Residues 188–225 (EEIEEAEAEAQATDADTATDDSEQTSEEQAEENKEDKE) form a disordered region. The span at 204-217 (TATDDSEQTSEEQA) shows a compositional bias: acidic residues.

Belongs to the bacterial ribosomal protein bL25 family. CTC subfamily. In terms of assembly, part of the 50S ribosomal subunit; part of the 5S rRNA/L5/L18/L25 subcomplex. Contacts the 5S rRNA. Binds to the 5S rRNA independently of L5 and L18.

In terms of biological role, this is one of the proteins that binds to the 5S RNA in the ribosome where it forms part of the central protuberance. The polypeptide is Large ribosomal subunit protein bL25 (Exiguobacterium sibiricum (strain DSM 17290 / CCUG 55495 / CIP 109462 / JCM 13490 / 255-15)).